We begin with the raw amino-acid sequence, 464 residues long: Asparagine--tRNA ligase (464 aa).

It belongs to the class-II aminoacyl-tRNA synthetase family. Homodimer.

The protein resides in the cytoplasm. It catalyses the reaction tRNA(Asn) + L-asparagine + ATP = L-asparaginyl-tRNA(Asn) + AMP + diphosphate + H(+). The chain is Asparagine--tRNA ligase from Xanthomonas axonopodis pv. citri (strain 306).